The primary structure comprises 108 residues: Competence protein ComGC (108 aa).

Positions 1–13 (MKKMMTFLKKAKV) are cleaved as a signal peptide. The interval 14–39 (KAFTLVEMLVVLLIISVLFLLFVPNL) is may be involved in polymerization of ComGC. Phe-16 is subject to N-methylphenylalanine. A helical membrane pass occupies residues 16–36 (FTLVEMLVVLLIISVLFLLFV).

It belongs to the ComGC family. In terms of assembly, the transformation pili are flexible filaments, consisting mainly of the major pilin ComGC and smaller amounts of the minor pilins, including at least ComGD, ComGF and ComGG, and perhaps ComGE. Homodimer. Forms higher-order multimers. Interacts with ComGG; the interaction is probably direct. In terms of processing, undergoes proteolytic cleavage.

The protein resides in the cell membrane. It localises to the cell surface. Its subcellular location is the fimbrium. The protein localises to the secreted. In terms of biological role, major component of the type IV-like pilus (T4P) that plays a role in transformation. Transformation pili are dynamically extended and retracted, perhaps thereby promoting DNA uptake and transformation. Required for transformation. Required for DNA binding. The protein is Competence protein ComGC of Streptococcus pneumoniae (strain ATCC BAA-255 / R6).